We begin with the raw amino-acid sequence, 1098 residues long: Probable arabinosyltransferase B (1098 aa).

12 helical membrane passes run 28–50 (WVAT…LPVV), 217–239 (LKLL…LWRL), 271–293 (ASWR…WHVI), 402–419 (LRPE…YVLI), 434–456 (AVVT…AALV), 472–494 (LVGT…TVVF), 541–558 (FGFL…FIML), 570–587 (PAWR…FLMF), 597–619 (GLFA…PSVL), 626–648 (MAFL…GWWY), 663–685 (IDGI…YAAW), and 698–720 (LIRA…VFVA).

It belongs to the emb family.

The protein localises to the cell membrane. Its function is as follows. Arabinosyl transferase responsible for the polymerization of arabinose into the arabinan of arabinogalactan. The sequence is that of Probable arabinosyltransferase B (embB) from Mycobacterium bovis (strain ATCC BAA-935 / AF2122/97).